Consider the following 144-residue polypeptide: uncharacterized protein (144 aa).

Positions 1–16 are cleaved as a signal peptide; it reads MRKFLIVLLLPLLVLA.

This is an uncharacterized protein from Aquifex aeolicus (strain VF5).